Consider the following 245-residue polypeptide: Orotidine 5'-phosphate decarboxylase (245 aa).

Residues Asp22, Lys44, 71–80, Thr131, Arg192, Gln201, Gly221, and Arg222 each bind substrate; that span reads DLKFHDIPNT. Lys73 (proton donor) is an active-site residue.

It belongs to the OMP decarboxylase family. Type 1 subfamily. In terms of assembly, homodimer.

It carries out the reaction orotidine 5'-phosphate + H(+) = UMP + CO2. Its pathway is pyrimidine metabolism; UMP biosynthesis via de novo pathway; UMP from orotate: step 2/2. Functionally, catalyzes the decarboxylation of orotidine 5'-monophosphate (OMP) to uridine 5'-monophosphate (UMP). This is Orotidine 5'-phosphate decarboxylase from Yersinia pseudotuberculosis serotype O:3 (strain YPIII).